Consider the following 95-residue polypeptide: Aspartyl/glutamyl-tRNA(Asn/Gln) amidotransferase subunit C (95 aa).

The protein belongs to the GatC family. As to quaternary structure, heterotrimer of A, B and C subunits.

It carries out the reaction L-glutamyl-tRNA(Gln) + L-glutamine + ATP + H2O = L-glutaminyl-tRNA(Gln) + L-glutamate + ADP + phosphate + H(+). The enzyme catalyses L-aspartyl-tRNA(Asn) + L-glutamine + ATP + H2O = L-asparaginyl-tRNA(Asn) + L-glutamate + ADP + phosphate + 2 H(+). In terms of biological role, allows the formation of correctly charged Asn-tRNA(Asn) or Gln-tRNA(Gln) through the transamidation of misacylated Asp-tRNA(Asn) or Glu-tRNA(Gln) in organisms which lack either or both of asparaginyl-tRNA or glutaminyl-tRNA synthetases. The reaction takes place in the presence of glutamine and ATP through an activated phospho-Asp-tRNA(Asn) or phospho-Glu-tRNA(Gln). The sequence is that of Aspartyl/glutamyl-tRNA(Asn/Gln) amidotransferase subunit C from Laribacter hongkongensis (strain HLHK9).